The chain runs to 588 residues: Adenine deaminase (588 aa).

The protein belongs to the metallo-dependent hydrolases superfamily. Adenine deaminase family. In terms of assembly, homodimer. Requires Mn(2+) as cofactor.

It carries out the reaction adenine + H2O + H(+) = hypoxanthine + NH4(+). The protein is Adenine deaminase of Escherichia coli O7:K1 (strain IAI39 / ExPEC).